The sequence spans 104 residues: Integration host factor subunit beta (104 aa).

It belongs to the bacterial histone-like protein family. Heterodimer of an alpha and a beta chain.

In terms of biological role, this protein is one of the two subunits of integration host factor, a specific DNA-binding protein that functions in genetic recombination as well as in transcriptional and translational control. In Neisseria gonorrhoeae, this protein is Integration host factor subunit beta (ihfB).